The sequence spans 62 residues: Protein YnfQ (62 aa).

It belongs to the YmcF/YnqF peptide family.

The chain is Protein YnfQ from Escherichia coli (strain K12).